Reading from the N-terminus, the 185-residue chain is Uroplakin-2 (185 aa).

An N-terminal signal peptide occupies residues 1-26 (MASPWPVWTLSWILILLAVLVPGAAA). Positions 27 to 85 (DFNISSLSGLLSPVMTESLLVALPPCHLTGGNATLTVRRANDSKVVRSSFVVPPCRGRR) are excised as a propeptide. 3 N-linked (GlcNAc...) asparagine glycosylation sites follow: Asn-29, Asn-58, and Asn-67. The Lumenal segment spans residues 86–156 (ELVSVVDSGS…IGLAMARTGG (71 aa)). The chain crosses the membrane as a helical span at residues 157–177 (MVVITVLLSVAMFLLVLGLII). At 178–185 (ALALGARK) the chain is on the cytoplasmic side.

Belongs to the uroplakin-2 family. As to quaternary structure, interacts with uroplakin-1a (UPK1A). In terms of tissue distribution, bladder epithelium.

It localises to the cell membrane. Its function is as follows. Component of the asymmetric unit membrane (AUM); a highly specialized biomembrane elaborated by terminally differentiated urothelial cells. May play an important role in regulating the assembly of the AUM. In Bos taurus (Bovine), this protein is Uroplakin-2 (UPK2).